The primary structure comprises 165 residues: ATP synthase subunit b (165 aa).

A helical transmembrane segment spans residues 10–30; sequence LIFWMLLSFGIVFAVLAKYGF.

This sequence belongs to the ATPase B chain family. In terms of assembly, F-type ATPases have 2 components, F(1) - the catalytic core - and F(0) - the membrane proton channel. F(1) has five subunits: alpha(3), beta(3), gamma(1), delta(1), epsilon(1). F(0) has three main subunits: a(1), b(2) and c(10-14). The alpha and beta chains form an alternating ring which encloses part of the gamma chain. F(1) is attached to F(0) by a central stalk formed by the gamma and epsilon chains, while a peripheral stalk is formed by the delta and b chains.

The protein resides in the cell inner membrane. Functionally, f(1)F(0) ATP synthase produces ATP from ADP in the presence of a proton or sodium gradient. F-type ATPases consist of two structural domains, F(1) containing the extramembraneous catalytic core and F(0) containing the membrane proton channel, linked together by a central stalk and a peripheral stalk. During catalysis, ATP synthesis in the catalytic domain of F(1) is coupled via a rotary mechanism of the central stalk subunits to proton translocation. Component of the F(0) channel, it forms part of the peripheral stalk, linking F(1) to F(0). The chain is ATP synthase subunit b from Bacteroides fragilis (strain ATCC 25285 / DSM 2151 / CCUG 4856 / JCM 11019 / LMG 10263 / NCTC 9343 / Onslow / VPI 2553 / EN-2).